The sequence spans 87 residues: U3-theraphotoxin-Hhn1a 15 (87 aa).

Residues Met1–Ala24 form the signal peptide. The propeptide occupies Ser25–Arg52. 3 disulfide bridges follow: Cys54/Cys67, Cys61/Cys72, and Cys66/Cys79.

It belongs to the neurotoxin 10 (Hwtx-1) family. 51 (Hntx-8) subfamily. Hntx-8 sub-subfamily. As to expression, expressed by the venom gland.

It is found in the secreted. Ion channel inhibitor. This is U3-theraphotoxin-Hhn1a 15 from Cyriopagopus hainanus (Chinese bird spider).